A 228-amino-acid polypeptide reads, in one-letter code: MGRLKKLKKIRIHREGTHILWASFLLLLLINAALYWGIDCKIPFYVVAVASIAVYLLMVNFFRCPIRLFGKDTEKIVVAPADGKIVVIEEVDENEYFHDRRLMISIFMSIVNVHANWYPVDGTIKKVAHHNGNFMKAWLPKASTENERSTVVIETPEGVEVLTRQIAGAVARRIVTYAEVGEECYIDEHMGFIKFGSRVDVYLPLGTEVCVNMGQLTTGNQTVIAKLK.

Serine 197 serves as the catalytic Schiff-base intermediate with substrate; via pyruvic acid. Serine 197 carries the post-translational modification Pyruvic acid (Ser); by autocatalysis.

It belongs to the phosphatidylserine decarboxylase family. PSD-A subfamily. As to quaternary structure, heterodimer of a large membrane-associated beta subunit and a small pyruvoyl-containing alpha subunit. It depends on pyruvate as a cofactor. Is synthesized initially as an inactive proenzyme. Formation of the active enzyme involves a self-maturation process in which the active site pyruvoyl group is generated from an internal serine residue via an autocatalytic post-translational modification. Two non-identical subunits are generated from the proenzyme in this reaction, and the pyruvate is formed at the N-terminus of the alpha chain, which is derived from the carboxyl end of the proenzyme. The post-translation cleavage follows an unusual pathway, termed non-hydrolytic serinolysis, in which the side chain hydroxyl group of the serine supplies its oxygen atom to form the C-terminus of the beta chain, while the remainder of the serine residue undergoes an oxidative deamination to produce ammonia and the pyruvoyl prosthetic group on the alpha chain.

Its subcellular location is the cell membrane. It catalyses the reaction a 1,2-diacyl-sn-glycero-3-phospho-L-serine + H(+) = a 1,2-diacyl-sn-glycero-3-phosphoethanolamine + CO2. The protein operates within phospholipid metabolism; phosphatidylethanolamine biosynthesis; phosphatidylethanolamine from CDP-diacylglycerol: step 2/2. Functionally, catalyzes the formation of phosphatidylethanolamine (PtdEtn) from phosphatidylserine (PtdSer). The chain is Phosphatidylserine decarboxylase proenzyme from Bacteroides thetaiotaomicron (strain ATCC 29148 / DSM 2079 / JCM 5827 / CCUG 10774 / NCTC 10582 / VPI-5482 / E50).